Here is a 370-residue protein sequence, read N- to C-terminus: Endopolygalacturonase A (370 aa).

Positions 1-19 (MPSAKPLFCLATLAGAALA) are cleaved as a signal peptide. The propeptide occupies 20-32 (APAPSRATDFNKR). Cys-35 and Cys-50 form a disulfide bridge. PbH1 repeat units follow at residues 162–192 (SDNL…DISE), 193–214 (STYI…AINS), 215–235 (GENI…SIGS), 244–265 (VKNV…RIKT), 273–295 (VEDI…VIEQ), and 307–352 (SNGV…DITG). An intrachain disulfide couples Cys-209 to Cys-225. Residue His-229 is part of the active site. Residue Asn-246 is glycosylated (N-linked (GlcNAc...) asparagine). Intrachain disulfides connect Cys-335–Cys-340 and Cys-359–Cys-368.

Belongs to the glycosyl hydrolase 28 family.

It localises to the secreted. It carries out the reaction (1,4-alpha-D-galacturonosyl)n+m + H2O = (1,4-alpha-D-galacturonosyl)n + (1,4-alpha-D-galacturonosyl)m.. Involved in maceration and soft-rotting of plant tissue. Hydrolyzes the 1,4-alpha glycosidic bonds of de-esterified pectate in the smooth region of the plant cell wall. This chain is Endopolygalacturonase A (pgaA), found in Aspergillus awamori (Black koji mold).